Consider the following 129-residue polypeptide: Follitropin subunit beta (129 aa).

The first 18 residues, 1–18, serve as a signal peptide directing secretion; it reads MKTLQFFFLFCCWKAICC. 6 disulfide bridges follow: cysteine 21–cysteine 69, cysteine 35–cysteine 84, cysteine 38–cysteine 122, cysteine 46–cysteine 100, cysteine 50–cysteine 102, and cysteine 105–cysteine 112. N-linked (GlcNAc...) asparagine glycans are attached at residues asparagine 25 and asparagine 42.

It belongs to the glycoprotein hormones subunit beta family. As to quaternary structure, heterodimer. The active follitropin is a heterodimer composed of an alpha chain/CGA shared with other hormones and a unique beta chain/FSHB shown here.

It is found in the secreted. In terms of biological role, together with the alpha chain CGA constitutes follitropin, the follicle-stimulating hormone, and provides its biological specificity to the hormone heterodimer. Binds FSHR, a G protein-coupled receptor, on target cells to activate downstream signaling pathways. Follitropin is involved in follicle development and spermatogenesis in reproductive organs. This is Follitropin subunit beta (FSHB) from Homo sapiens (Human).